An 80-amino-acid chain; its full sequence is uncharacterized protein (80 aa).

It to B.cereus similar ORF in glnR 5'region.

This is an uncharacterized protein from Bacillus cereus.